We begin with the raw amino-acid sequence, 299 residues long: Virginiamycin B lyase (299 aa).

H229 serves as a coordination point for substrate. Position 269 (E269) interacts with Mg(2+). Catalysis depends on H271, which acts as the Proton acceptor. E286 contributes to the Mg(2+) binding site.

This sequence belongs to the Vgb family. In terms of assembly, monomer. Mg(2+) serves as cofactor.

Its function is as follows. Inactivates the type B streptogramin antibiotics by linearizing the lactone ring at the ester linkage, generating a free phenylglycine carboxylate and converting the threonyl moiety into 2-amino-butenoic acid. In Bordetella bronchiseptica (strain ATCC BAA-588 / NCTC 13252 / RB50) (Alcaligenes bronchisepticus), this protein is Virginiamycin B lyase.